The primary structure comprises 122 residues: Large ribosomal subunit protein uL14c (122 aa).

The protein belongs to the universal ribosomal protein uL14 family. Part of the 50S ribosomal subunit.

The protein localises to the plastid. The protein resides in the chloroplast. Binds to 23S rRNA. The polypeptide is Large ribosomal subunit protein uL14c (Pyropia yezoensis (Susabi-nori)).